The following is a 28-amino-acid chain: VGCEECPMHCKGKNAVPTCDNGVCNCNA.

3 cysteine pairs are disulfide-bonded: Cys3–Cys19, Cys6–Cys24, and Cys10–Cys26.

This sequence belongs to the short scorpion toxin superfamily. Potassium channel inhibitor family. Alpha-KTx 09 subfamily. As to expression, expressed by the venom gland.

It localises to the secreted. Blocks Shaker potassium channels. This chain is Potassium channel toxin alpha-KTx 9.10, found in Mesobuthus eupeus (Lesser Asian scorpion).